Reading from the N-terminus, the 202-residue chain is Translation initiation factor IF-3 (202 aa).

Residues 172–202 (KTRASARHPEVPGAGSVQDIDATGDTDGSPH) form a disordered region.

The protein belongs to the IF-3 family. In terms of assembly, monomer.

Its subcellular location is the cytoplasm. Functionally, IF-3 binds to the 30S ribosomal subunit and shifts the equilibrium between 70S ribosomes and their 50S and 30S subunits in favor of the free subunits, thus enhancing the availability of 30S subunits on which protein synthesis initiation begins. This chain is Translation initiation factor IF-3, found in Mycobacterium leprae (strain TN).